Reading from the N-terminus, the 543-residue chain is MTRYIFVTGGVVSSLGKGIASASLAAILEARGLKVTMLKLDPYINVDPGTMSPFQHGEVFVTHDGAETDLDLGHYERFIRTTMTQNNNFTTGRVYEHVLRKERRGDYLGATIQVIPHITDEIKRRIIKGAGDADVALVEIGGTVGDIESQPFLEAIRQLRVEVGSKRAMLMHLTLVPYIATAGETKTKPTQHSVKELRSIGLQPDVLICRSDHPVDVSSRRKIALFTNVEERAVISLEDVDTIYKIPAVLHAQGLDDFVVERFGLQCNGADLSEWEKVVDAKLNPEHEVTIAMVGKYMELLDAYKSLIEAMSHAGITNRTKVNLRYIDSEDIENQGTALLEGVDAILVPGGFGLRGVEGKITAVQYARENKVPYLGICLGMQVAVIEFARNVLGWKDANSTEFDRASGHPVVGLITEWEDATGAVEVRTEASDLGGTMRLGAQECLLEAGSKVHDCYGKDVIVERHRHRYEVNNNLLPQIIEAGLKISGRSSDAALVEVVEAPDHPWFVACQFHPEFTSTPRDGHPLFSGFVKAALAQHQKKA.

An amidoligase domain region spans residues 1–265 (MTRYIFVTGG…DDFVVERFGL (265 aa)). CTP is bound at residue serine 13. Serine 13 lines the UTP pocket. Residues 14 to 19 (SLGKGI) and aspartate 71 each bind ATP. Mg(2+) contacts are provided by aspartate 71 and glutamate 139. Residues 146 to 148 (DIE), 186 to 191 (KTKPTQ), and lysine 222 each bind CTP. UTP-binding positions include 186–191 (KTKPTQ) and lysine 222. Positions 290–541 (TIAMVGKYME…VKAALAQHQK (252 aa)) constitute a Glutamine amidotransferase type-1 domain. Position 351 (glycine 351) interacts with L-glutamine. Catalysis depends on cysteine 378, which acts as the Nucleophile; for glutamine hydrolysis. L-glutamine is bound by residues 379–382 (LGMQ), glutamate 402, and arginine 469. Residues histidine 514 and glutamate 516 contribute to the active site.

The protein belongs to the CTP synthase family. As to quaternary structure, homotetramer.

The catalysed reaction is UTP + L-glutamine + ATP + H2O = CTP + L-glutamate + ADP + phosphate + 2 H(+). It catalyses the reaction L-glutamine + H2O = L-glutamate + NH4(+). It carries out the reaction UTP + NH4(+) + ATP = CTP + ADP + phosphate + 2 H(+). It functions in the pathway pyrimidine metabolism; CTP biosynthesis via de novo pathway; CTP from UDP: step 2/2. Its activity is regulated as follows. Allosterically activated by GTP, when glutamine is the substrate; GTP has no effect on the reaction when ammonia is the substrate. The allosteric effector GTP functions by stabilizing the protein conformation that binds the tetrahedral intermediate(s) formed during glutamine hydrolysis. Inhibited by the product CTP, via allosteric rather than competitive inhibition. Functionally, catalyzes the ATP-dependent amination of UTP to CTP with either L-glutamine or ammonia as the source of nitrogen. Regulates intracellular CTP levels through interactions with the four ribonucleotide triphosphates. The sequence is that of CTP synthase from Pseudomonas fluorescens (strain Pf0-1).